We begin with the raw amino-acid sequence, 453 residues long: DDB1- and CUL4-associated factor 12 (453 aa).

Basic residues predominate over residues 1–12; sequence MARKVVSRKRKA. Residues 1–34 form a disordered region; sequence MARKVVSRKRKAPASPGAGSDAQGPQFGWDHSLH. The required for nuclear location and interaction with MOV10 stretch occupies residues 1-38; sequence MARKVVSRKRKAPASPGAGSDAQGPQFGWDHSLHKRKR. Ser15 carries the post-translational modification Phosphoserine. WD repeat units follow at residues 81 to 122, 123 to 175, 176 to 242, 243 to 286, 287 to 331, and 332 to 366; these read EREF…TSQI, TKIP…TLDP, VCVG…ALKD, IPKE…NTLS, KLLS…SYNV, and KSVCSRERGSGIRSVSFYEHIITVGTGQGSLLFYD.

This sequence belongs to the WD repeat DCAF12 family. Component of the DCX(DCAF12) E3 ubiquitin ligase complex, at least composed of CUL4 (CUL4A or CUL4B), DDB1, DCAF12 and RBX1. Highly expressed in lung cancer tissues and some cancer cell lines. Restricted expression in normal testis.

The protein localises to the cytoplasm. Its subcellular location is the cytoskeleton. It is found in the microtubule organizing center. The protein resides in the centrosome. It localises to the nucleus. The protein operates within protein modification; protein ubiquitination. Its function is as follows. Substrate-recognition component of a DCX (DDB1-CUL4-X-box) E3 ubiquitin-protein ligase complex of the DesCEND (destruction via C-end degrons) pathway, which recognizes a C-degron located at the extreme C terminus of target proteins, leading to their ubiquitination and degradation. The C-degron recognized by the DesCEND pathway is usually a motif of less than ten residues and can be present in full-length proteins, truncated proteins or proteolytically cleaved forms. The DCX(DCAF12) complex specifically recognizes proteins with a diglutamate (Glu-Glu) at the C-terminus, such as MAGEA3, MAGEA6 and CCT5, leading to their ubiquitination and degradation. Ubiquitination of MAGEA3, MAGEA6 by DCX(DCAF12) complex is required for starvation-induced autophagy. Also directly recognizes the C-terminal glutamate-leucine (Glu-Leu) degron as an alternative degron in proteins such as MOV10, leading to their ubiquitination and degradation. Controls the protein level of MOV10 during spermatogenesis and in T cells, especially after their activation. The sequence is that of DDB1- and CUL4-associated factor 12 from Homo sapiens (Human).